The chain runs to 143 residues: Small ribosomal subunit protein uS11c (143 aa).

It belongs to the universal ribosomal protein uS11 family. As to quaternary structure, part of the 30S ribosomal subunit.

It is found in the plastid. The protein resides in the chloroplast. The chain is Small ribosomal subunit protein uS11c from Hordeum vulgare (Barley).